The primary structure comprises 572 residues: Galectin-3-binding protein B (572 aa).

A signal peptide spans 1-14 (MLLLWPLLFLQVSA). The SRCR domain maps to 32–131 (VRLVGVIPSS…HKEDAGVICA (100 aa)). 3 cysteine pairs are disulfide-bonded: cysteine 56–cysteine 120, cysteine 69–cysteine 130, and cysteine 100–cysteine 110. Residues asparagine 135, asparagine 195, and asparagine 202 are each glycosylated (N-linked (GlcNAc...) asparagine). The 68-residue stretch at 164–231 (CDFTIAVRDL…LYTRQIDVST (68 aa)) folds into the BTB domain. The BACK domain occupies 270–372 (QVSMYEYGVR…IPVDKLYDIQ (103 aa)). 2 N-linked (GlcNAc...) asparagine glycosylation sites follow: asparagine 430 and asparagine 548.

Its subcellular location is the secreted. The protein localises to the extracellular space. It is found in the extracellular matrix. Its function is as follows. Promotes integrin-mediated cell adhesion. The chain is Galectin-3-binding protein B (lgals3bpb) from Danio rerio (Zebrafish).